The chain runs to 566 residues: MDIKSNIINALKEVISKEICKEIDIKLDKTPNLELGDYSVNICFRLAKELKKNPKIIAEELVDKLKAMNIEGVKEIKAVNGYINFYIDYNKFAKNLMEEIDKKGNNYGRGDKKSIKIILEHTSANPNGPLHIGHLRNAIIGDCLKRILEFYGYDVETHYYVNDMGRQMALVVYGIELFGLDKEKKKDHAIAETYVKINKYLEEHPEEEEKILELMRKYEDALENNEDNEITKKFEFAVNYALDGIKETLKNLNIKHDTFVWESSYVRNGMVKKVIEKLMETGKVIKEETYMLDLSDFGIEKKMVLARANGTSLYSTRDIAYHLDKLSKCDIGIDVLGADHKLTAEMVKAALKLLGSKVPEVIFYEFISLPEGSMSTRRGRFISTDELLEEAIKRAKEECNKRGVEENIAYDIGLGAVRYNIARISPEKPMVFRWEEALDFEKVGCPFIQYAHARCCSILKEAENKGVKDEAVFNYELTSEEKELIKMLDEFKDIIKESAESRRVHILANYLLELAKAFNRFYANCPILMTKVDDDVKKSRLKLVKSTKTVLETGLELLGINCPGRM.

The short motif at 124–134 is the 'HIGH' region element; sequence ANPNGPLHIGH.

This sequence belongs to the class-I aminoacyl-tRNA synthetase family.

It is found in the cytoplasm. The enzyme catalyses tRNA(Arg) + L-arginine + ATP = L-arginyl-tRNA(Arg) + AMP + diphosphate. The polypeptide is Arginine--tRNA ligase (argS) (Methanocaldococcus jannaschii (strain ATCC 43067 / DSM 2661 / JAL-1 / JCM 10045 / NBRC 100440) (Methanococcus jannaschii)).